The chain runs to 508 residues: MTTTPKPLVLMILDGFGHSDSPESNAVYAAKKPVLDRLWATVPNGLISGSGMDVGLPDGQMGNSEVGHMNLGAGRVVYQDFTRVTKAIRDGEFFENPTICAAVDKAVAAGKAVHFMGLLSDGGVHSHQDHLIAMAELAFKRGAEKIYLHAFLDGRDTPPKSAASSIELLDATFQALGKGRIASLIGRYYAMDRDNRWDRVAQAYNLIVDGKGEINAATAQEGLEAAYARGESDEFVKATSIGEPVKVEDGDAVVFMNFRADRARELSRVFVEDGFKEFERARQPKVQYVGLTQYAESIPAPAAFAPGSLENVLGDYLAKNGKTQLRIAETEKYAHVTFFFSGGREEPFPGEERILIPSPKVATYDLQPEMSAPEVTDRIVEAIENQRYDVIVVNYANGDMVGHSGVFEAAVKAVECLDTCVGRIVEALEKVGGEALITADHGNVEQMADESTGQAHTAHTTEPVPFIYVGKRDLKVREGGVLADVAPTMLKLLGLEKPAEMTGTSILV.

The Mn(2+) site is built by Asp-14 and Ser-64. Catalysis depends on Ser-64, which acts as the Phosphoserine intermediate. Residues His-125, 155–156, Arg-187, Arg-193, 259–262, and Lys-332 contribute to the substrate site; these read RD and RADR. Mn(2+) contacts are provided by Asp-399, His-403, Asp-440, His-441, and His-459.

It belongs to the BPG-independent phosphoglycerate mutase family. In terms of assembly, monomer. Mn(2+) is required as a cofactor.

The enzyme catalyses (2R)-2-phosphoglycerate = (2R)-3-phosphoglycerate. Its pathway is carbohydrate degradation; glycolysis; pyruvate from D-glyceraldehyde 3-phosphate: step 3/5. Catalyzes the interconversion of 2-phosphoglycerate and 3-phosphoglycerate. This Pseudomonas fluorescens (strain Pf0-1) protein is 2,3-bisphosphoglycerate-independent phosphoglycerate mutase.